Here is a 460-residue protein sequence, read N- to C-terminus: Indoleacetamide hydrolase (460 aa).

Residues Lys-71 and Ser-146 each act as charge relay system in the active site. Catalysis depends on Ser-169, which acts as the Acyl-ester intermediate.

This sequence belongs to the amidase family.

Its pathway is plant hormone metabolism; auxin biosynthesis. Functionally, hydrolyzes indole-3-acetamide (IAM) into indole-3-acetic acid (IAA). The chain is Indoleacetamide hydrolase (iaaH) from Pantoea agglomerans pv. gypsophilae (Erwinia herbicola).